The chain runs to 958 residues: SLIT and NTRK-like protein 5 (958 aa).

The signal sequence occupies residues 1–40 (MHTCCPPVTLEQDLHRKMHSWMLQTLAFAVTSLVLSCAET). Residues 41–664 (IDYYGEICDN…GGGASSVPLS (624 aa)) lie on the Extracellular side of the membrane. LRR repeat units follow at residues 82-103 (PIYH…EFVN), 106-127 (GASI…AFHG), 130-151 (GLRR…TFLG), 154-175 (NLEY…AFGK), 178-199 (LLQV…LFRF), and 201-222 (PLTH…GLLQ). An N-linked (GlcNAc...) asparagine glycan is attached at asparagine 103. The 52-residue stretch at 235–286 (NPWNCSCELISLKDWLDSISYSALVGDVVCETPFRLHGRDLDEVSKQELCPR) folds into the LRRCT 1 domain. Positions 317–358 (ATSSSAVYKPPLKPPKGTRQPNKPRVRPTSRQPSKDLGYSNY) are disordered. Positions 365–407 (QTKSPVPLECPTACSCNLQISDLGLNVNCQERKIESIAELQPK) constitute an LRRNT domain. 6 LRR repeats span residues 410–431 (NPKK…DFLE), 434–455 (GLDL…AFGD), 458–479 (NLRR…LFYG), 482–503 (SLQY…TFDP), 506–527 (NLQL…VFSG), and 529–550 (TLLR…GVLD). An LRRCT 2 domain is found at 563–614 (NPWDCTCDIVGMKLWVEQLKVGVLVDEVICKAPKKFAETDMRSIKSELLCPD). An N-linked (GlcNAc...) asparagine glycan is attached at asparagine 644. Residues 665 to 685 (VLILSLLLVFIMSVFVAAGLF) form a helical membrane-spanning segment. The Cytoplasmic portion of the chain corresponds to 686 to 958 (VLVMKRRKKN…LEKQTTFSQF (273 aa)). The interval 789–844 (NHHLQQQQQPPPPPQQPQQQPPPQLQLQPGEEERRESHHLRSPAYSVSTIEPREDL) is disordered. A compositionally biased stretch (pro residues) spans 797–812 (QPPPPPQQPQQQPPPQ).

This sequence belongs to the SLITRK family. As to expression, expressed predominantly in the cerebral cortex of the brain but also at low levels in the spinal cord and medulla.

It is found in the membrane. Its function is as follows. Suppresses neurite outgrowth. The sequence is that of SLIT and NTRK-like protein 5 (SLITRK5) from Homo sapiens (Human).